Here is a 948-residue protein sequence, read N- to C-terminus: MSFNKLESYSNKEVIREEVAILTDLLADITRNLLSPETFEKISLMEDLAVNSKYHELKAIVEELTTDEMVYISRYFSILPLLINISEDVDLAYEINHQNNINQDYLGKLSTTIDLISTRENAQEILENLNVVPVLTAHPTQVQRKTILDLTNHIHSLLRQHRDVKAGLVNEKKWLGNLRRYIELMMQTDMIREKKLKVTNEITNVMEYYNSSFLQAITNFMVEYRRLAEERGIKLDNPKPITMGMWIGGDRDGNPFVTAETLKLSATLQSEVILNYYIDKVYTLYRTFSLSTNLSETSQAVAEMAALSTDKSVYRENEPYRRAFHYIQSKLIQTLLYLKEGNFSNDGQRLTDRAEEKLSAKANLSVSNKGREIIPNYIQSRISETLTELKKEETPSYKTAQEFKEDLQVIYDSLIEHHGEALVSGDLTELLQAVDVFGFFLASIDMRQDSSVHEACVAELLASANIVQDYSSLSEEEKCQVLLKQLLEDPRILSATHEPKSELLQKELEIFKTARQLKDAIGEEVIKQNIISHSTSVSDLLELAIMLKEVGLIDENGARVQIVPLFETIEDLDNSCNTMEKYLSLPIAQKWIASKDNYQEIMLGYSDSNKDGGYLSSCWTLYKAQQQLTAIGDKFGVKITFFHGRGGTVGRGGGPTYEAITSQPLRSINDRIRLTEQGEVIGNKYGNKDAAYYNLEMLVSAAINRMVTHKKSDSHTSDKYERIMDQVVNRSYQIYRDLVFGDERFYDYFFESSPIKAISSFNIGSRPAARKTITEIGGLRAIPWVFSWSQSRVMFPGWYGVGSSFKEFIDEDPENNLAFLQFMYKRWPFFKSLLSNVDMVLSKSNMNIAFEYAQLCEDQNVRDIFNIILDEWQLTKDVILEIEGHDELLAENTYLRDSLHYRMPYFNVLNYIQLELIKRQRNGQLTPDQEKLIHITINGIATGLRNSG.

Active-site residues include histidine 138 and lysine 610.

This sequence belongs to the PEPCase type 1 family. Mg(2+) serves as cofactor.

The enzyme catalyses oxaloacetate + phosphate = phosphoenolpyruvate + hydrogencarbonate. Its function is as follows. Forms oxaloacetate, a four-carbon dicarboxylic acid source for the tricarboxylic acid cycle. The protein is Phosphoenolpyruvate carboxylase of Streptococcus sanguinis (strain SK36).